We begin with the raw amino-acid sequence, 61 residues long: Large ribosomal subunit protein bL32 (61 aa).

The segment covering 1 to 16 has biased composition (basic residues); it reads MAVPKKKTSKSRKNMR. Residues 1 to 20 form a disordered region; it reads MAVPKKKTSKSRKNMRRAHD.

The protein belongs to the bacterial ribosomal protein bL32 family.

This is Large ribosomal subunit protein bL32 from Pelobacter propionicus (strain DSM 2379 / NBRC 103807 / OttBd1).